Consider the following 332-residue polypeptide: Putative pumilio homolog 20 (332 aa).

The region spanning 1 to 332 (MAHQLRFAAA…NIASILNSIR (332 aa)) is the PUM-HD domain. Pumilio repeat units lie at residues 89–124 (SDPD…FAAA) and 125–159 (ILRR…AMYE). Residues 160 to 191 (HILHYASHIARDKHGNLALNDIITDAYRNKLF) form a Pumilio 3; degenerate repeat. 3 Pumilio repeats span residues 192 to 228 (DVIA…NIVV), 229 to 266 (SLRG…ELME), and 267 to 303 (CEGD…DLFW).

The protein localises to the cytoplasm. In terms of biological role, sequence-specific RNA-binding protein that regulates translation and mRNA stability by binding the 3'-UTR of target mRNAs. The chain is Putative pumilio homolog 20 (APUM20) from Arabidopsis thaliana (Mouse-ear cress).